The following is a 191-amino-acid chain: Large ribosomal subunit protein uL6 (191 aa).

Belongs to the universal ribosomal protein uL6 family. Part of the 50S ribosomal subunit.

This protein binds to the 23S rRNA, and is important in its secondary structure. It is located near the subunit interface in the base of the L7/L12 stalk, and near the tRNA binding site of the peptidyltransferase center. In Cyanothece sp. (strain PCC 7425 / ATCC 29141), this protein is Large ribosomal subunit protein uL6.